A 145-amino-acid polypeptide reads, in one-letter code: 3-hydroxyacyl-[acyl-carrier-protein] dehydratase FabZ (145 aa).

The active site involves His49.

It belongs to the thioester dehydratase family. FabZ subfamily.

It is found in the cytoplasm. It carries out the reaction a (3R)-hydroxyacyl-[ACP] = a (2E)-enoyl-[ACP] + H2O. Involved in unsaturated fatty acids biosynthesis. Catalyzes the dehydration of short chain beta-hydroxyacyl-ACPs and long chain saturated and unsaturated beta-hydroxyacyl-ACPs. The polypeptide is 3-hydroxyacyl-[acyl-carrier-protein] dehydratase FabZ (Ehrlichia ruminantium (strain Welgevonden)).